A 309-amino-acid polypeptide reads, in one-letter code: Foldase protein PrsA 2 (309 aa).

The first 22 residues, 1 to 22 (MKQMNKLITGVVTLATVVTLSA), serve as a signal peptide directing secretion. C23 carries the N-palmitoyl cysteine lipid modification. Residue C23 is the site of S-diacylglycerol cysteine attachment. Positions 146 to 241 (TPTMTAEIMQ…RTYHIIKVTK (96 aa)) constitute a PpiC domain.

This sequence belongs to the PrsA family.

It is found in the cell membrane. The catalysed reaction is [protein]-peptidylproline (omega=180) = [protein]-peptidylproline (omega=0). In terms of biological role, plays a major role in protein secretion by helping the post-translocational extracellular folding of several secreted proteins. The polypeptide is Foldase protein PrsA 2 (Streptococcus pyogenes serotype M6 (strain ATCC BAA-946 / MGAS10394)).